Reading from the N-terminus, the 340-residue chain is Protein RecA (340 aa).

65–72 contributes to the ATP binding site; the sequence is GPESGGKT.

Belongs to the RecA family.

Its subcellular location is the cytoplasm. Functionally, can catalyze the hydrolysis of ATP in the presence of single-stranded DNA, the ATP-dependent uptake of single-stranded DNA by duplex DNA, and the ATP-dependent hybridization of homologous single-stranded DNAs. It interacts with LexA causing its activation and leading to its autocatalytic cleavage. The sequence is that of Protein RecA from Thermus thermophilus (strain ATCC 27634 / DSM 579 / HB8).